The primary structure comprises 253 residues: MAPCIPKKYTAGQNPVTKFEGAFVVTKMDPPEGRCFLFHTVINVNHHRVKALEKSGKKPPKHFHPNQYEYFKVISGQLTVEINDVEHILTPEDGEVTLEPGPHHRLWGTPGQKNDKVVFLISASTNARSYQLDQAFFENWYGYQEDMMMRGTAPDLIQVCCMFEAGDSYLSPPWWVPFRHFFGYWLTVILGYYIGSLLGYQPFFPEWTTDWDAACDKMASSLLQKKFAIRELQDVVKKNFDANGDPLPAKKLL.

Residues 181–203 traverse the membrane as a helical segment; that stretch reads FFGYWLTVILGYYIGSLLGYQPF.

It belongs to the oxidoreductase OpS7 family.

The protein resides in the membrane. It functions in the pathway secondary metabolite biosynthesis; terpenoid biosynthesis. In terms of biological role, oxidoreductase; part of the gene cluster that mediates the biosynthesis of sesquiterpenyl epoxy-cyclohexenoids (SECs) such as anthrobotrisins and arthrosporols, metabolites that possess a novel hybrid carbon skeleton consisting of a polyketide-derived epoxycyclohexenol combined with a terpenoid-derived monocyclic sesquiterpenol substructure (PKS-PTS hybrid). The SEC pathway plays an important role for fungal soil colonization via decreasing fungal nematode-capturing ability. Within the pathway, the oxidoreductase AOL_s00215g277 seems to play a role in the farnesylation step of toluquinol to produce farnesyl hydroquinone, the hybrid precursor for biosynthesis of SECs. The pathway begins with the biosynthesis of 6-methylsalicylic acid (6-MSA), the first precursor of the polyketide-derived epoxycyclohexenol in arthrosporols, by the polyketide synthase (PKS) AOL_s00215g283 via condensation of 1 acetate and 3 malonate units. The 6-methylsalicylic acid decarboxylase AOL_s00215g281 then catalyzes the decarboxylation of 6-methylsalicylic acid to yield m-cresol. The cytochrome P450 monooxygenase AOL_s00215g282 further oxidizes m-cresol to yield toluquinol. With the assistance of the oxidoreductase AOL_s00215g277, the polyprenyl transferase AOL_s00215g276 catalyzes the farnesylation of toluquinol to produce farnesyl hydroquinone, the hybrid precursor for biosynthesis of SECs. Farnesyl hydroquinone undergoes epoxidation and then subsequent dehydrogenation to form farnesyl epoxy-quinone, the first and simplest SEC. The cytochrome P450 monooxygenase AOL_s00215g278 and the FAD-dependent monooxygenase AOL_s00215g279 might be involved in the oxygenation of the phenol moiety, most likely in the epoxy formation. The cytochrome P450 monooxygenases AOL_s00215g274 and AOL_s00215g280 are involved in specific regional ketone reductions at respectively C-4 and C-1 of farnesyl epoxy-quinone PubMed:33823587. The protein is Oxidoreductase AOL_s00215g277 of Arthrobotrys oligospora (strain ATCC 24927 / CBS 115.81 / DSM 1491) (Nematode-trapping fungus).